A 119-amino-acid chain; its full sequence is Large ribosomal subunit protein uL14 (119 aa).

The protein belongs to the universal ribosomal protein uL14 family. As to quaternary structure, part of the 50S ribosomal subunit. Forms a cluster with proteins L3 and L19. In the 70S ribosome, L14 and L19 interact and together make contacts with the 16S rRNA in bridges B5 and B8.

Functionally, binds to 23S rRNA. Forms part of two intersubunit bridges in the 70S ribosome. The polypeptide is Large ribosomal subunit protein uL14 (Wolbachia sp. subsp. Brugia malayi (strain TRS)).